Consider the following 489-residue polypeptide: Pluviatolide synthase (489 aa).

The helical transmembrane segment at 6-26 (SVLGLSSTLIIALAITVIFLL) threads the bilayer. Cys-432 contacts heme.

The protein belongs to the cytochrome P450 family. Heme serves as cofactor.

It localises to the membrane. It carries out the reaction (-)-matairesinol + reduced [NADPH--hemoprotein reductase] + O2 = (-)-pluviatolide + oxidized [NADPH--hemoprotein reductase] + 2 H2O + H(+). Its pathway is aromatic compound metabolism; phenylpropanoid biosynthesis. In terms of biological role, cytochrome P450 involved in the biosynthesis of etoposide, a chemotherapeutic compound of the topoisomerase inhibitor family. Catalyzes the conversion of matairesinol to pluviatolide. The polypeptide is Pluviatolide synthase (Podophyllum peltatum (American mandrake)).